A 254-amino-acid polypeptide reads, in one-letter code: Type III pantothenate kinase 2 (254 aa).

6-13 is an ATP binding site; sequence DMGNSHIH. 107 to 110 is a binding site for substrate; sequence GADR. The active-site Proton acceptor is the Asp109. Asp130 provides a ligand contact to K(+). Residue Thr133 participates in ATP binding. Thr185 is a substrate binding site.

Belongs to the type III pantothenate kinase family. As to quaternary structure, homodimer. NH4(+) is required as a cofactor. Requires K(+) as cofactor.

It is found in the cytoplasm. It carries out the reaction (R)-pantothenate + ATP = (R)-4'-phosphopantothenate + ADP + H(+). It participates in cofactor biosynthesis; coenzyme A biosynthesis; CoA from (R)-pantothenate: step 1/5. In terms of biological role, catalyzes the phosphorylation of pantothenate (Pan), the first step in CoA biosynthesis. This is Type III pantothenate kinase 2 from Francisella tularensis subsp. holarctica (strain LVS).